Reading from the N-terminus, the 79-residue chain is MPKRILQGTVVSDKNEKTVVVKVERRFTHPVMKKTVRMTKKYKAHDENNAHKVGDQVFIQESKPISKDKRWIVVSSDQA.

This sequence belongs to the universal ribosomal protein uS17 family. As to quaternary structure, part of the 30S ribosomal subunit.

Functionally, one of the primary rRNA binding proteins, it binds specifically to the 5'-end of 16S ribosomal RNA. The sequence is that of Small ribosomal subunit protein uS17 from Mesorhizobium japonicum (strain LMG 29417 / CECT 9101 / MAFF 303099) (Mesorhizobium loti (strain MAFF 303099)).